Consider the following 149-residue polypeptide: MGEHVIALNKKAKFNYEILETWEAGIELYGPEIKSIRNHEANIAEAFILIRKKEAFLINANIKKYDYANFVKGIDPLRTRKLLLHKKEINKILKRVMLEKLTIVPLRLYLKGNYAKLEIGLGRGKKIHDKRETIKKRDIERKEMRKYKY.

It belongs to the SmpB family.

Its subcellular location is the cytoplasm. Required for rescue of stalled ribosomes mediated by trans-translation. Binds to transfer-messenger RNA (tmRNA), required for stable association of tmRNA with ribosomes. tmRNA and SmpB together mimic tRNA shape, replacing the anticodon stem-loop with SmpB. tmRNA is encoded by the ssrA gene; the 2 termini fold to resemble tRNA(Ala) and it encodes a 'tag peptide', a short internal open reading frame. During trans-translation Ala-aminoacylated tmRNA acts like a tRNA, entering the A-site of stalled ribosomes, displacing the stalled mRNA. The ribosome then switches to translate the ORF on the tmRNA; the nascent peptide is terminated with the 'tag peptide' encoded by the tmRNA and targeted for degradation. The ribosome is freed to recommence translation, which seems to be the essential function of trans-translation. The sequence is that of SsrA-binding protein from Mesoplasma florum (strain ATCC 33453 / NBRC 100688 / NCTC 11704 / L1) (Acholeplasma florum).